The following is a 238-amino-acid chain: Large ribosomal subunit protein uL1 (238 aa).

This sequence belongs to the universal ribosomal protein uL1 family. As to quaternary structure, part of the 50S ribosomal subunit.

Its function is as follows. Binds directly to 23S rRNA. The L1 stalk is quite mobile in the ribosome, and is involved in E site tRNA release. In terms of biological role, protein L1 is also a translational repressor protein, it controls the translation of the L11 operon by binding to its mRNA. This Frankia casuarinae (strain DSM 45818 / CECT 9043 / HFP020203 / CcI3) protein is Large ribosomal subunit protein uL1.